The sequence spans 182 residues: Bifunctional protein PyrR (182 aa).

A PRPP-binding motif is present at residues 98–110 (VVLVDDVLFTGRS).

This sequence belongs to the purine/pyrimidine phosphoribosyltransferase family. PyrR subfamily.

The catalysed reaction is UMP + diphosphate = 5-phospho-alpha-D-ribose 1-diphosphate + uracil. In terms of biological role, regulates the transcription of the pyrimidine nucleotide (pyr) operon in response to exogenous pyrimidines. Its function is as follows. Also displays a weak uracil phosphoribosyltransferase activity which is not physiologically significant. This is Bifunctional protein PyrR from Dehalococcoides mccartyi (strain ATCC BAA-2100 / JCM 16839 / KCTC 5957 / BAV1).